We begin with the raw amino-acid sequence, 172 residues long: Disulfide bond formation protein B (172 aa).

Residues 1–13 lie on the Cytoplasmic side of the membrane; it reads MNWLAQLPTQRTP. A helical membrane pass occupies residues 14–30; that stretch reads WLLFSGIVFLLEITALF. Residues 31–48 lie on the Periplasmic side of the membrane; the sequence is FQYKMGLAPCIMCIYQRT. A disulfide bond links Cys40 and Cys43. A helical membrane pass occupies residues 49 to 64; it reads AVLGLLIAGIIGTSNP. The Cytoplasmic portion of the chain corresponds to 65–71; it reads EHRGVRL. A helical transmembrane segment spans residues 72 to 89; the sequence is LAYSVWAVSSVWGFIIAR. Over 90–145 the chain is Periplasmic; it reads EHIEMQTTTDPFAFSCEFEPNFPAFMPLHEWIPSFFAATGDCGNIDWQFAGLSMPA. A disulfide bond links Cys105 and Cys131. A helical membrane pass occupies residues 146 to 164; sequence WMEVIFALFAATLFLLVTS. Residues 165 to 172 lie on the Cytoplasmic side of the membrane; the sequence is RLMTKRSL.

It belongs to the DsbB family.

The protein resides in the cell inner membrane. Its function is as follows. Required for disulfide bond formation in some periplasmic proteins. Acts by oxidizing the DsbA protein. The chain is Disulfide bond formation protein B from Pseudoalteromonas translucida (strain TAC 125).